The chain runs to 263 residues: Proteasome subunit beta type-4 (263 aa).

An N-acetylmethionine modification is found at Met-1. Residues 1-44 (MEAFWESRTGHWAGGPAPGQFYRVPSTPSCLMDPMSAPARPITR) constitute a propeptide that is removed on maturation. Ser-26 bears the Phosphoserine mark. Residue Tyr-101 is modified to Phosphotyrosine.

The protein belongs to the peptidase T1B family. As to quaternary structure, the 26S proteasome consists of a 20S proteasome core and two 19S regulatory subunits. The 20S proteasome core is a barrel-shaped complex made of 28 subunits that are arranged in four stacked rings. The two outer rings are each formed by seven alpha subunits, and the two inner rings are formed by seven beta subunits. The proteolytic activity is exerted by three beta-subunits PSMB5, PSMB6 and PSMB7. Forms a ternary complex with SMAD1 and OAZ1 before PSMB4 is incorporated into the 20S proteasome. Interacts with PRPF19.

It is found in the cytoplasm. The protein resides in the nucleus. In terms of biological role, non-catalytic component of the 20S core proteasome complex involved in the proteolytic degradation of most intracellular proteins. This complex plays numerous essential roles within the cell by associating with different regulatory particles. Associated with two 19S regulatory particles, forms the 26S proteasome and thus participates in the ATP-dependent degradation of ubiquitinated proteins. The 26S proteasome plays a key role in the maintenance of protein homeostasis by removing misfolded or damaged proteins that could impair cellular functions, and by removing proteins whose functions are no longer required. Associated with the PA200 or PA28, the 20S proteasome mediates ubiquitin-independent protein degradation. This type of proteolysis is required in several pathways including spermatogenesis (20S-PA200 complex) or generation of a subset of MHC class I-presented antigenic peptides (20S-PA28 complex). SMAD1/OAZ1/PSMB4 complex mediates the degradation of the CREBBP/EP300 repressor SNIP1. The polypeptide is Proteasome subunit beta type-4 (Psmb4) (Rattus norvegicus (Rat)).